The chain runs to 384 residues: PqqA peptide cyclase (384 aa).

A Radical SAM core domain is found at 14–230; that stretch reads IPAPVGLLAE…EAARERLKGQ (217 aa). [4Fe-4S] cluster is bound by residues C28, C32, and C35.

This sequence belongs to the radical SAM superfamily. PqqE family. In terms of assembly, interacts with PqqD. The interaction is necessary for activity of PqqE. [4Fe-4S] cluster is required as a cofactor.

It catalyses the reaction [PQQ precursor protein] + S-adenosyl-L-methionine = E-Y cross-linked-[PQQ precursor protein] + 5'-deoxyadenosine + L-methionine + H(+). It participates in cofactor biosynthesis; pyrroloquinoline quinone biosynthesis. Catalyzes the cross-linking of a glutamate residue and a tyrosine residue in the PqqA protein as part of the biosynthesis of pyrroloquinoline quinone (PQQ). This is PqqA peptide cyclase from Methylorubrum extorquens (strain CM4 / NCIMB 13688) (Methylobacterium extorquens).